The following is a 319-amino-acid chain: V-set and transmembrane domain-containing protein 4 (319 aa).

A signal peptide spans 1–23 (MRLRLLALAAAVLLGPAPEVCGA). The Ig-like domain occupies 24–154 (LNVTVSPGPV…SSATEMRVIS (131 aa)). N-linked (GlcNAc...) asparagine glycans are attached at residues asparagine 25 and asparagine 41. Cysteine 46 and cysteine 126 are joined by a disulfide. A glycan (N-linked (GlcNAc...) asparagine) is linked at asparagine 143. The chain crosses the membrane as a helical span at residues 180–200 (AVLVCCVGILSVLLFTLVIAW).

Proteolytically cleaved to generate a bioactive peptide. In terms of tissue distribution, peptide Lv is widely expressed in various tissues and the central nervous system, including the retinal photoreceptor layer, hippocampus, olfactory bulb, and cerebellum.

It localises to the cell membrane. It is found in the secreted. In terms of biological role, peptide Lv enhances L-type voltage-gated calcium channel (L-VGCC) currents in retinal photoreceptors. This Mus musculus (Mouse) protein is V-set and transmembrane domain-containing protein 4 (Vstm4).